Consider the following 963-residue polypeptide: Non-ribosomal peptide synthetase CmlP (963 aa).

One can recognise a Carrier domain in the interval 492 to 568 (GEDAAELRRV…AAFLRHLRGE (77 aa)). Ser-526 carries the post-translational modification O-(pantetheine 4'-phosphoryl)serine. The tract at residues 928 to 963 (GRLLGTPPDTPAGDRPERTGTTAEAQNGAAHAPTPR) is disordered.

Belongs to the ATP-dependent AMP-binding enzyme family. Pantetheine 4'-phosphate serves as cofactor.

It catalyses the reaction 4-amino-L-phenylalanine + holo-[peptidyl-carrier protein] + ATP = 4-amino-L-phenylalanyl-[peptidyl-carrier protein] + AMP + diphosphate. It participates in antibiotic biosynthesis. Functionally, involved in chloramphenicol biosynthesis. Activates 4-amino-L-phenylalanine by adenylation and loads it onto its peptidyl carrier domain, via a thioester linkage to the phosphopanthetheine moiety. Can also adenylate tyrosine and phenylalanine at low rates, but not L-p-nitrophenylalanine or threo-phenylserine. The protein is Non-ribosomal peptide synthetase CmlP of Streptomyces venezuelae (strain ATCC 10712 / CBS 650.69 / DSM 40230 / JCM 4526 / NBRC 13096 / PD 04745).